We begin with the raw amino-acid sequence, 501 residues long: Glycerol kinase (501 aa).

Residue T17 coordinates ADP. Residues T17, T18, and S19 each contribute to the ATP site. Position 17 (T17) interacts with sn-glycerol 3-phosphate. R21 contacts ADP. 4 residues coordinate sn-glycerol 3-phosphate: R87, E88, Y139, and D243. 5 residues coordinate glycerol: R87, E88, Y139, D243, and Q244. Positions 265 and 308 each coordinate ADP. ATP contacts are provided by T265, G308, Q312, and G409. Residues G409 and N413 each coordinate ADP.

The protein belongs to the FGGY kinase family.

It carries out the reaction glycerol + ATP = sn-glycerol 3-phosphate + ADP + H(+). It participates in polyol metabolism; glycerol degradation via glycerol kinase pathway; sn-glycerol 3-phosphate from glycerol: step 1/1. Its activity is regulated as follows. Inhibited by fructose 1,6-bisphosphate (FBP). Its function is as follows. Key enzyme in the regulation of glycerol uptake and metabolism. Catalyzes the phosphorylation of glycerol to yield sn-glycerol 3-phosphate. The sequence is that of Glycerol kinase from Pseudomonas syringae pv. syringae (strain B728a).